A 412-amino-acid polypeptide reads, in one-letter code: CinA-like protein (412 aa).

The protein belongs to the CinA family.

In Salinibacter ruber (strain DSM 13855 / M31), this protein is CinA-like protein.